Reading from the N-terminus, the 28-residue chain is Odorant-binding protein 1 (28 aa).

It belongs to the calycin superfamily. Lipocalin family. In terms of tissue distribution, nasal mucosa.

Its subcellular location is the secreted. It is found in the extracellular space. Its function is as follows. This soluble protein may play a specific role in odor discrimination and perception. This is Odorant-binding protein 1 from Hystrix cristata (North African crested porcupine).